The sequence spans 140 residues: Large ribosomal subunit protein uL16 (140 aa).

Residues 1–17 (MPLMPKRVKHRKMHRGS) show a composition bias toward basic residues. Residues 1–21 (MPLMPKRVKHRKMHRGSRSGN) are disordered.

The protein belongs to the universal ribosomal protein uL16 family. In terms of assembly, part of the 50S ribosomal subunit.

Binds 23S rRNA and is also seen to make contacts with the A and possibly P site tRNAs. The chain is Large ribosomal subunit protein uL16 from Akkermansia muciniphila (strain ATCC BAA-835 / DSM 22959 / JCM 33894 / BCRC 81048 / CCUG 64013 / CIP 107961 / Muc).